The sequence spans 253 residues: Ubiquinone/menaquinone biosynthesis C-methyltransferase UbiE (253 aa).

S-adenosyl-L-methionine is bound by residues T76, D97, 125–126, and S142; that span reads NA.

It belongs to the class I-like SAM-binding methyltransferase superfamily. MenG/UbiE family.

It catalyses the reaction a 2-demethylmenaquinol + S-adenosyl-L-methionine = a menaquinol + S-adenosyl-L-homocysteine + H(+). The catalysed reaction is a 2-methoxy-6-(all-trans-polyprenyl)benzene-1,4-diol + S-adenosyl-L-methionine = a 5-methoxy-2-methyl-3-(all-trans-polyprenyl)benzene-1,4-diol + S-adenosyl-L-homocysteine + H(+). The protein operates within quinol/quinone metabolism; menaquinone biosynthesis; menaquinol from 1,4-dihydroxy-2-naphthoate: step 2/2. It functions in the pathway cofactor biosynthesis; ubiquinone biosynthesis. In terms of biological role, methyltransferase required for the conversion of demethylmenaquinol (DMKH2) to menaquinol (MKH2) and the conversion of 2-polyprenyl-6-methoxy-1,4-benzoquinol (DDMQH2) to 2-polyprenyl-3-methyl-6-methoxy-1,4-benzoquinol (DMQH2). The protein is Ubiquinone/menaquinone biosynthesis C-methyltransferase UbiE of Xanthomonas campestris pv. campestris (strain ATCC 33913 / DSM 3586 / NCPPB 528 / LMG 568 / P 25).